The chain runs to 298 residues: Inosose dehydratase (298 aa).

It belongs to the IolE/MocC family. Requires glutathione as cofactor. Co(2+) serves as cofactor. The cofactor is Mn(2+).

The enzyme catalyses scyllo-inosose = 3D-3,5/4-trihydroxycyclohexane-1,2-dione + H2O. Its pathway is polyol metabolism; myo-inositol degradation into acetyl-CoA; acetyl-CoA from myo-inositol: step 2/7. Its function is as follows. Catalyzes the dehydration of inosose (2-keto-myo-inositol, 2KMI or 2,4,6/3,5-pentahydroxycyclohexanone) to 3D-(3,5/4)-trihydroxycyclohexane-1,2-dione (D-2,3-diketo-4-deoxy-epi-inositol). The chain is Inosose dehydratase from Clostridium botulinum (strain Eklund 17B / Type B).